Consider the following 382-residue polypeptide: MSSSNLFKPIPLGRKVLQHKVVLSPMTRFRADNDGVPLSYVKSYYGQRASIRGTLLITEAVAICPRAKGFSNCPGIWHQDQIAAWKEVVDEVHSKGSVIWLQLWATGRASDADTLKESGFHLESSSDVPVAPGEPVPRPLSEDEIESYIRDYVTGAINAVQGAGFDGIEIHGANGFLVDQFLQASCNTRADQWGGSIENRSRFGLEITRRVVDAVGKDRVGVKLSPWSTFQGMGTMDDLVAQFEHFISRLREMDIAYIHLVNTRWLEEEEPGIKTHPDVDNQTFVRMWGNKTPILLAGGYDADSARRLVDETYSDQNNIMVVFGRHYISNPDLPFRLRLGIPLQKYNRDTFYIPFSDEGYLDYPFCQEFLDQQDVDQVVVAA.

Residues 25-27 (PMT), Ala-60, Gln-102, and His-171 contribute to the FMN site. Positions 171 and 174 each coordinate substrate. Residues Lys-223, Gly-299, 324-325 (GR), and Arg-325 contribute to the FMN site. Tyr-352 is a binding site for substrate.

This sequence belongs to the NADH:flavin oxidoreductase/NADH oxidase family.

In terms of biological role, probable inactive dehydrogenase; part of the gene cluster that mediates the biosynthesis of fungal ergot alkaloid. DmaW catalyzes the first step of ergot alkaloid biosynthesis by condensing dimethylallyl diphosphate (DMAP) and tryptophan to form 4-dimethylallyl-L-tryptophan. The second step is catalyzed by the methyltransferase easF that methylates 4-dimethylallyl-L-tryptophan in the presence of S-adenosyl-L-methionine, resulting in the formation of 4-dimethylallyl-L-abrine. The catalase easC and the FAD-dependent oxidoreductase easE then transform 4-dimethylallyl-L-abrine to chanoclavine-I which is further oxidized by easD in the presence of NAD(+), resulting in the formation of chanoclavine-I aldehyde. Agroclavine dehydrogenase easG then mediates the conversion of chanoclavine-I aldehyde to agroclavine via a non-enzymatic adduct reaction: the substrate is an iminium intermediate that is formed spontaneously from chanoclavine-I aldehyde in the presence of glutathione. Further conversion of agroclavine to paspalic acid is a two-step process involving oxidation of agroclavine to elymoclavine and of elymoclavine to paspalic acid, the second step being performed by the elymoclavine oxidase cloA. However, cloA does not encode a functional enzyme indicating that C.fusiformis terminates its ergot alkaloid pathway at elymoclavine. The sequence is that of Probable inactive dehydrogenase easA from Claviceps fusiformis (Ergot fungus).